Reading from the N-terminus, the 690-residue chain is Methionine--tRNA ligase 1 (690 aa).

Residues 11-21 (PYANGHIHIGH) carry the 'HIGH' region motif. 4 residues coordinate Zn(2+): cysteine 142, cysteine 145, cysteine 155, and cysteine 158. The 'KMSKS' region signature appears at 328-332 (KMSKS). Lysine 331 lines the ATP pocket. The tRNA-binding domain occupies 590 to 690 (DFSKVDLRVA…SGAKPGMRVH (101 aa)).

The protein belongs to the class-I aminoacyl-tRNA synthetase family. MetG type 1 subfamily. Homodimer. Zn(2+) serves as cofactor.

The protein resides in the cytoplasm. The enzyme catalyses tRNA(Met) + L-methionine + ATP = L-methionyl-tRNA(Met) + AMP + diphosphate. Is required not only for elongation of protein synthesis but also for the initiation of all mRNA translation through initiator tRNA(fMet) aminoacylation. This is Methionine--tRNA ligase 1 from Sorangium cellulosum (strain So ce56) (Polyangium cellulosum (strain So ce56)).